A 387-amino-acid chain; its full sequence is tRNA-specific 2-thiouridylase MnmA (387 aa).

ATP-binding positions include 6-13 (AMSGGVDS) and Leu-32. Cys-101 (nucleophile) is an active-site residue. Cysteines 101 and 199 form a disulfide. Gly-125 is an ATP binding site. The interaction with tRNA stretch occupies residues 148 to 150 (KDQ). Residue Cys-199 is the Cysteine persulfide intermediate of the active site.

The protein belongs to the MnmA/TRMU family.

Its subcellular location is the cytoplasm. The enzyme catalyses S-sulfanyl-L-cysteinyl-[protein] + uridine(34) in tRNA + AH2 + ATP = 2-thiouridine(34) in tRNA + L-cysteinyl-[protein] + A + AMP + diphosphate + H(+). In terms of biological role, catalyzes the 2-thiolation of uridine at the wobble position (U34) of tRNA, leading to the formation of s(2)U34. In Clavibacter michiganensis subsp. michiganensis (strain NCPPB 382), this protein is tRNA-specific 2-thiouridylase MnmA.